The following is a 447-amino-acid chain: Tyrosine aminotransferase (447 aa).

K273 carries the post-translational modification N6-(pyridoxal phosphate)lysine. Phosphoserine is present on S441.

It belongs to the class-I pyridoxal-phosphate-dependent aminotransferase family. In terms of assembly, homodimer. The cofactor is pyridoxal 5'-phosphate.

The enzyme catalyses L-tyrosine + 2-oxoglutarate = 3-(4-hydroxyphenyl)pyruvate + L-glutamate. The protein operates within amino-acid degradation; L-phenylalanine degradation; acetoacetate and fumarate from L-phenylalanine: step 2/6. Functionally, transaminase involved in tyrosine breakdown. Converts tyrosine to p-hydroxyphenylpyruvate. Can catalyze the reverse reaction, using glutamic acid, with 2-oxoglutarate as cosubstrate (in vitro). Has much lower affinity and transaminase activity for phenylalanine. This is Tyrosine aminotransferase (TAT) from Bos taurus (Bovine).